The following is a 208-amino-acid chain: Uracil phosphoribosyltransferase (208 aa).

5-phospho-alpha-D-ribose 1-diphosphate-binding positions include R78, R103, and 130-138; that span reads DPMLATGGS. Residues I193 and 198-200 contribute to the uracil site; that span reads GDA. D199 is a 5-phospho-alpha-D-ribose 1-diphosphate binding site.

The protein belongs to the UPRTase family. Requires Mg(2+) as cofactor.

The catalysed reaction is UMP + diphosphate = 5-phospho-alpha-D-ribose 1-diphosphate + uracil. It functions in the pathway pyrimidine metabolism; UMP biosynthesis via salvage pathway; UMP from uracil: step 1/1. With respect to regulation, allosterically activated by GTP. Catalyzes the conversion of uracil and 5-phospho-alpha-D-ribose 1-diphosphate (PRPP) to UMP and diphosphate. The sequence is that of Uracil phosphoribosyltransferase from Wolinella succinogenes (strain ATCC 29543 / DSM 1740 / CCUG 13145 / JCM 31913 / LMG 7466 / NCTC 11488 / FDC 602W) (Vibrio succinogenes).